We begin with the raw amino-acid sequence, 846 residues long: DNA mismatch repair protein MutS (846 aa).

594–601 (GPNMSGKS) contacts ATP.

The protein belongs to the DNA mismatch repair MutS family.

This protein is involved in the repair of mismatches in DNA. It is possible that it carries out the mismatch recognition step. This protein has a weak ATPase activity. The sequence is that of DNA mismatch repair protein MutS from Macrococcus caseolyticus (strain JCSC5402) (Macrococcoides caseolyticum).